We begin with the raw amino-acid sequence, 115 residues long: Large ribosomal subunit protein bL20 (115 aa).

This sequence belongs to the bacterial ribosomal protein bL20 family.

Binds directly to 23S ribosomal RNA and is necessary for the in vitro assembly process of the 50S ribosomal subunit. It is not involved in the protein synthesizing functions of that subunit. The protein is Large ribosomal subunit protein bL20 of Malacoplasma penetrans (strain HF-2) (Mycoplasma penetrans).